We begin with the raw amino-acid sequence, 51 residues long: Large ribosomal subunit protein bL32c (51 aa).

This sequence belongs to the bacterial ribosomal protein bL32 family.

It is found in the plastid. It localises to the chloroplast. The protein is Large ribosomal subunit protein bL32c of Oenothera elata subsp. hookeri (Hooker's evening primrose).